The sequence spans 483 residues: Acetyl-coenzyme A carboxylase carboxyl transferase subunit beta, chloroplastic (483 aa).

In terms of domain architecture, CoA carboxyltransferase N-terminal spans 219 to 483; that stretch reads LWVQCENCYG…LHTFFPLNQN (265 aa). Zn(2+) is bound by residues Cys-223, Cys-226, Cys-242, and Cys-245. A C4-type zinc finger spans residues 223 to 245; sequence CENCYGLNYKKFFKSKMNLCEQC.

Belongs to the AccD/PCCB family. Acetyl-CoA carboxylase is a heterohexamer composed of biotin carboxyl carrier protein, biotin carboxylase and 2 subunits each of ACCase subunit alpha and ACCase plastid-coded subunit beta (accD). Requires Zn(2+) as cofactor.

It localises to the plastid. The protein localises to the chloroplast stroma. It carries out the reaction N(6)-carboxybiotinyl-L-lysyl-[protein] + acetyl-CoA = N(6)-biotinyl-L-lysyl-[protein] + malonyl-CoA. The protein operates within lipid metabolism; malonyl-CoA biosynthesis; malonyl-CoA from acetyl-CoA: step 1/1. In terms of biological role, component of the acetyl coenzyme A carboxylase (ACC) complex. Biotin carboxylase (BC) catalyzes the carboxylation of biotin on its carrier protein (BCCP) and then the CO(2) group is transferred by the transcarboxylase to acetyl-CoA to form malonyl-CoA. This is Acetyl-coenzyme A carboxylase carboxyl transferase subunit beta, chloroplastic from Guizotia abyssinica (Niger).